A 159-amino-acid chain; its full sequence is Ribosomal RNA large subunit methyltransferase H (159 aa).

Residues Leu76, Gly108, and 127–132 contribute to the S-adenosyl-L-methionine site; that span reads FGRLTL.

Belongs to the RNA methyltransferase RlmH family. In terms of assembly, homodimer.

Its subcellular location is the cytoplasm. It catalyses the reaction pseudouridine(1915) in 23S rRNA + S-adenosyl-L-methionine = N(3)-methylpseudouridine(1915) in 23S rRNA + S-adenosyl-L-homocysteine + H(+). Its function is as follows. Specifically methylates the pseudouridine at position 1915 (m3Psi1915) in 23S rRNA. The polypeptide is Ribosomal RNA large subunit methyltransferase H (Streptococcus uberis (strain ATCC BAA-854 / 0140J)).